Reading from the N-terminus, the 420-residue chain is MSFATISVIGLGYIGLPTAAAFASRQKQVIGVDINQHAVDTINRGEIHIVEPDLASVVKTAVEGGFLRASTTPVEADAWLIAVPTPFKGDHEPDMTYVESAARSIAPVLKKGALVILESTSPVGSTEKMAEWLAEMRPDLTFPQQVGEQADVNIAYCPERVLPGQVMVELIKNDRVIGGMTPVCSARASELYKIFLEGECVVTNSRTAEMCKLTENSFRDVNIAFANELSLICADQGINVWELIRLANRHPRVNILQPGPGVGGHCIAVDPWFIVAQNPQQARLIRTAREVNDHKPFWVIDQVKAAVADCLAATDKRASELKIACFGLAFKPNIDDLRESPAMEIAELIAQWHSGETLVVEPNIHQLPKKLTGLCTLAQLDEALATADVLVMLVDHSQFKVINGDNVHQQYVVDAKGVWR.

Positions 13, 14, 33, 85, and 126 each coordinate NAD(+). Residues Arg-160, Val-161, Lys-212, Asn-216, Arg-219, His-250, Arg-252, and Gly-263 each coordinate UDP-N-acetyl-alpha-D-mannosaminouronate. Lys-212 serves as the catalytic Proton donor/acceptor. The Nucleophile role is filled by Cys-266. Positions 330 and 331 each coordinate UDP-N-acetyl-alpha-D-mannosaminouronate. NAD(+) is bound at residue Arg-338. Lys-416 contributes to the UDP-N-acetyl-alpha-D-mannosaminouronate binding site.

Belongs to the UDP-glucose/GDP-mannose dehydrogenase family. WecC subfamily. As to quaternary structure, homodimer.

The enzyme catalyses UDP-N-acetyl-alpha-D-mannosamine + 2 NAD(+) + H2O = UDP-N-acetyl-alpha-D-mannosaminouronate + 2 NADH + 3 H(+). It functions in the pathway bacterial outer membrane biogenesis; enterobacterial common antigen biosynthesis. Functionally, catalyzes the four-electron oxidation of UDP-N-acetyl-D-mannosamine (UDP-ManNAc), reducing NAD(+) and releasing UDP-N-acetylmannosaminuronic acid (UDP-ManNAcA). In Shigella flexneri, this protein is UDP-N-acetyl-D-mannosamine dehydrogenase.